The chain runs to 195 residues: MILPIYVYGHEALRNETDPVQENTEALQELIDNMIETMHNAAGIGLAAPQVGRTERLFVVDLTPMADEIAEAGEPLPPQPMVFINPEIVEESEDTAEMEEGCLSIPEVREAVARPERIRMRYRDREFEEQELEAGGMLSRVLQHERDHLDGVLFTDYLSSFRKRLLRRPLREMVNGEVEADYPLVTKDDETVPSR.

Fe cation-binding residues include C102 and H144. Residue E145 is part of the active site. H148 lines the Fe cation pocket.

It belongs to the polypeptide deformylase family. It depends on Fe(2+) as a cofactor.

The catalysed reaction is N-terminal N-formyl-L-methionyl-[peptide] + H2O = N-terminal L-methionyl-[peptide] + formate. Removes the formyl group from the N-terminal Met of newly synthesized proteins. Requires at least a dipeptide for an efficient rate of reaction. N-terminal L-methionine is a prerequisite for activity but the enzyme has broad specificity at other positions. The polypeptide is Peptide deformylase (Salinibacter ruber (strain DSM 13855 / M31)).